The primary structure comprises 181 residues: Early E3 20.3 kDa glycoprotein (181 aa).

N-linked (GlcNAc...) asparagine; by host glycosylation is found at Asn-29, Asn-57, Asn-70, and Asn-75.

Belongs to the adenoviridae E3_20 family.

Functionally, E3 proteins seem to be dispensable for virus growth in tissue culture cells. They are potentially important for virus growth under special conditions; E3 region may help adenoviruses to evade the immune surveillance of the host. This is Early E3 20.3 kDa glycoprotein from Human adenovirus B serotype 11 (strain Slobiski) (HAdV-11).